The chain runs to 897 residues: MDWQPDEQGLQQVLQLLKDSQSPNTATQRIVQDKLKQLNQFPDFNNYLIFVLTRLKSEDEPTRSLSGLILKNNVKAHYQSFPPPVADFIKQECLNNIGDASSLIRATIGILITTIASKGELQMWPELLPQLCNLLNSEDYNTCEGAFGALQKICEDSSELLDSDALNRPLNIMIPKFLQFFKHCSPKIRSHAIACVNQFIMDRAQALMDNIDTFIEHLFALAVDDDPEVRKNVCRALVMLLEVRIDRLIPHMHSIIQYMLQRTQDHDENVALEACEFWLTLAEQPICKEVLASHLVQLIPILVNGMKYSEIDIILLKGDVEEDEAVPDSEQDIKPRFHKSRTVTLPHEAERPDGSEDAEDDDDDDALSDWNLRKCSAAALDVLANVFREELLPHLLPLLKGLLFHPEWVVKESGILVLGAIAEGCMQGMVPYLPELIPHLIQCLSDKKALVRSIACWTLSRYAHWVVSQPPDMHLKPLMTELLKRILDGNKRVQEAACSAFATLEEEACTELVPYLSYILDTLVFAFGKYQHKNLLILYDAIGTLADSVGHHLNQPEYIQKLMPPLIQKWNELKDEDKDLFPLLECLSSVATALQSGFLPYCEPVYQRCVTLVQKTLAQAMMYTQHPEQYEAPDKDFMIVALDLLSGLAEGLGGHVEQLVARSNIMTLLFQCMQDSMPEVRQSSFALLGDLTKACFIHVKPCIAEFMPILGTNLNPEFISVCNNATWAIGEICMQMGAEMQPYVQMVLNNLVEIINRPNTPKTLLENTGRLTSPSAIPAITIGRLGYVCPQEVAPMLQQFIRPWCTSLRNIRDNEEKDSAFRGICMMIGVNPGGVVQDFIFFCDAVASWVSPKDDLRDMFYKILHGFKDQVGEDNWQQFSEQFPPLLKERLAAFYGV.

HEAT repeat units lie at residues 9 to 36, 41 to 79, 88 to 121, 127 to 164, 171 to 201, 214 to 241, 253 to 280, 296 to 386, 394 to 422, 434 to 461, 475 to 508, 516 to 549, 557 to 595, 603 to 654, 665 to 696, 704 to 737, 745 to 790, 798 to 831, 840 to 871, and 874 to 894; these read GLQQ…DKLK, FPDF…AHYQ, FIKQ…KGEL, LLPQ…LDSD, NIMI…QFIM, FIEH…VMLL, HSII…FWLT, VQLI…LANV, HLLP…GAIA, PELI…TLSR, LKPL…EEEA, LSYI…ADSV, EYIQ…TALQ, EPVY…GLGG, IMTL…KACF, AEFM…MQMG, QMVL…YVCP, QQFI…IGVN, IFFC…KDQV, and DNWQ…LAAF. One can recognise an Importin N-terminal domain in the interval 31-99; it reads VQDKLKQLNQ…KQECLNNIGD (69 aa). The interval 325–364 is disordered; that stretch reads AVPDSEQDIKPRFHKSRTVTLPHEAERPDGSEDAEDDDDD. Positions 355–364 are enriched in acidic residues; the sequence is SEDAEDDDDD. An N6-acetyllysine modification is found at K862.

Belongs to the importin beta family. Importin beta-2 subfamily.

The protein localises to the cytoplasm. It localises to the nucleus. Its function is as follows. Probably functions in nuclear protein import as nuclear transport receptor. Serves as receptor for nuclear localization signals (NLS) in cargo substrates. Is thought to mediate docking of the importin/substrate complex to the nuclear pore complex (NPC) through binding to nucleoporin and the complex is subsequently translocated through the pore by an energy requiring, Ran-dependent mechanism. At the nucleoplasmic side of the NPC, Ran binds to the importin, the importin/substrate complex dissociates and importin is re-exported from the nucleus to the cytoplasm where GTP hydrolysis releases Ran. The directionality of nuclear import is thought to be conferred by an asymmetric distribution of the GTP- and GDP-bound forms of Ran between the cytoplasm and nucleus. The chain is Transportin-2 (TNPO2) from Homo sapiens (Human).